A 261-amino-acid polypeptide reads, in one-letter code: Thioesterase TesA (261 aa).

Residues Ser104, Asp208, and His236 contribute to the active site.

This sequence belongs to the thioesterase family.

It catalyses the reaction a fatty acyl-CoA + H2O = a fatty acid + CoA + H(+). Its function is as follows. Involved in the synthesis of both phthiocerol dimycocerosates (PDIMs) and phenolic glycolipids (PGLs), which are structurally related lipids non-covalently bound to the outer cell wall layer of M.tuberculosis and are important virulence factors. The sequence is that of Thioesterase TesA (tesA) from Mycobacterium leprae (strain TN).